We begin with the raw amino-acid sequence, 335 residues long: tRNA N6-adenosine threonylcarbamoyltransferase (335 aa).

H109, H113, and Y130 together coordinate a divalent metal cation. Substrate contacts are provided by residues 130 to 134 (YVSGG), D162, G177, E181, and N266. Residue D294 coordinates a divalent metal cation.

The protein belongs to the KAE1 / TsaD family. In terms of assembly, component of the EKC/KEOPS complex composed of at least GON7, TP53RK, TPRKB, OSGEP and LAGE3; the whole complex dimerizes. The cofactor is a divalent metal cation.

It is found in the cytoplasm. The protein localises to the nucleus. The catalysed reaction is L-threonylcarbamoyladenylate + adenosine(37) in tRNA = N(6)-L-threonylcarbamoyladenosine(37) in tRNA + AMP + H(+). Functionally, component of the EKC/KEOPS complex that is required for the formation of a threonylcarbamoyl group on adenosine at position 37 (t(6)A37) in tRNAs that read codons beginning with adenine. The complex is probably involved in the transfer of the threonylcarbamoyl moiety of threonylcarbamoyl-AMP (TC-AMP) to the N6 group of A37. OSGEP likely plays a direct catalytic role in this reaction, but requires other protein(s) of the complex to fulfill this activity. In Bos taurus (Bovine), this protein is tRNA N6-adenosine threonylcarbamoyltransferase.